The sequence spans 163 residues: HTH-type transcriptional regulator IscR (163 aa).

Positions 2–131 (RLTSKGRYAV…NNITLGELVN (130 aa)) constitute an HTH rrf2-type domain. Residues 28–51 (LADISERQGISLSYLEQLFSRLRK) constitute a DNA-binding region (H-T-H motif). The [2Fe-2S] cluster site is built by C92, C98, and C104.

[2Fe-2S] cluster serves as cofactor.

Functionally, regulates the transcription of several operons and genes involved in the biogenesis of Fe-S clusters and Fe-S-containing proteins. The sequence is that of HTH-type transcriptional regulator IscR from Klebsiella pneumoniae (strain 342).